Reading from the N-terminus, the 557-residue chain is Dihydroxy-acid dehydratase (557 aa).

Aspartate 78 contacts Mg(2+). Cysteine 119 is a [2Fe-2S] cluster binding site. Aspartate 120 and lysine 121 together coordinate Mg(2+). Lysine 121 bears the N6-carboxylysine mark. Cysteine 194 lines the [2Fe-2S] cluster pocket. Glutamate 446 serves as a coordination point for Mg(2+). The active-site Proton acceptor is the serine 472.

This sequence belongs to the IlvD/Edd family. In terms of assembly, homodimer. It depends on [2Fe-2S] cluster as a cofactor. Mg(2+) is required as a cofactor.

The enzyme catalyses (2R)-2,3-dihydroxy-3-methylbutanoate = 3-methyl-2-oxobutanoate + H2O. It catalyses the reaction (2R,3R)-2,3-dihydroxy-3-methylpentanoate = (S)-3-methyl-2-oxopentanoate + H2O. Its pathway is amino-acid biosynthesis; L-isoleucine biosynthesis; L-isoleucine from 2-oxobutanoate: step 3/4. It functions in the pathway amino-acid biosynthesis; L-valine biosynthesis; L-valine from pyruvate: step 3/4. Functionally, functions in the biosynthesis of branched-chain amino acids. Catalyzes the dehydration of (2R,3R)-2,3-dihydroxy-3-methylpentanoate (2,3-dihydroxy-3-methylvalerate) into 2-oxo-3-methylpentanoate (2-oxo-3-methylvalerate) and of (2R)-2,3-dihydroxy-3-methylbutanoate (2,3-dihydroxyisovalerate) into 2-oxo-3-methylbutanoate (2-oxoisovalerate), the penultimate precursor to L-isoleucine and L-valine, respectively. The polypeptide is Dihydroxy-acid dehydratase (Desulfosudis oleivorans (strain DSM 6200 / JCM 39069 / Hxd3) (Desulfococcus oleovorans)).